A 376-amino-acid chain; its full sequence is Glucose-1-phosphate adenylyltransferase (376 aa).

Alpha-D-glucose 1-phosphate-binding positions include tyrosine 101, glycine 166, 181–182, and serine 192; that span reads EK.

The protein belongs to the bacterial/plant glucose-1-phosphate adenylyltransferase family. In terms of assembly, homotetramer.

It catalyses the reaction alpha-D-glucose 1-phosphate + ATP + H(+) = ADP-alpha-D-glucose + diphosphate. It participates in glycan biosynthesis; glycogen biosynthesis. Functionally, involved in the biosynthesis of ADP-glucose, a building block required for the elongation reactions to produce glycogen. Catalyzes the reaction between ATP and alpha-D-glucose 1-phosphate (G1P) to produce pyrophosphate and ADP-Glc. The polypeptide is Glucose-1-phosphate adenylyltransferase (Bacillus mycoides (strain KBAB4) (Bacillus weihenstephanensis)).